We begin with the raw amino-acid sequence, 305 residues long: UDP-3-O-acyl-N-acetylglucosamine deacetylase (305 aa).

Residues histidine 79, histidine 238, and aspartate 242 each contribute to the Zn(2+) site. Histidine 265 functions as the Proton donor in the catalytic mechanism.

This sequence belongs to the LpxC family. Zn(2+) is required as a cofactor.

The catalysed reaction is a UDP-3-O-[(3R)-3-hydroxyacyl]-N-acetyl-alpha-D-glucosamine + H2O = a UDP-3-O-[(3R)-3-hydroxyacyl]-alpha-D-glucosamine + acetate. The protein operates within glycolipid biosynthesis; lipid IV(A) biosynthesis; lipid IV(A) from (3R)-3-hydroxytetradecanoyl-[acyl-carrier-protein] and UDP-N-acetyl-alpha-D-glucosamine: step 2/6. Its function is as follows. Catalyzes the hydrolysis of UDP-3-O-myristoyl-N-acetylglucosamine to form UDP-3-O-myristoylglucosamine and acetate, the committed step in lipid A biosynthesis. This is UDP-3-O-acyl-N-acetylglucosamine deacetylase from Colwellia psychrerythraea (strain 34H / ATCC BAA-681) (Vibrio psychroerythus).